A 357-amino-acid polypeptide reads, in one-letter code: Alanine racemase (357 aa).

Lys35 functions as the Proton acceptor; specific for D-alanine in the catalytic mechanism. An N6-(pyridoxal phosphate)lysine modification is found at Lys35. Arg128 contacts substrate. The active-site Proton acceptor; specific for L-alanine is the Tyr254. Residue Met302 participates in substrate binding.

This sequence belongs to the alanine racemase family. It depends on pyridoxal 5'-phosphate as a cofactor.

The catalysed reaction is L-alanine = D-alanine. It participates in amino-acid biosynthesis; D-alanine biosynthesis; D-alanine from L-alanine: step 1/1. Its function is as follows. Catalyzes the interconversion of L-alanine and D-alanine. May also act on other amino acids. This chain is Alanine racemase (alr), found in Marinobacter nauticus (strain ATCC 700491 / DSM 11845 / VT8) (Marinobacter aquaeolei).